A 351-amino-acid polypeptide reads, in one-letter code: UPF0421 protein BC_2748 (351 aa).

The next 4 helical transmembrane spans lie at 19–39 (IAVF…IFAV), 74–94 (FTFF…FTIV), 109–129 (TLTA…AFLI), and 131–151 (LATT…IFPP).

The protein belongs to the UPF0421 family.

It localises to the cell membrane. This Bacillus cereus (strain ATCC 14579 / DSM 31 / CCUG 7414 / JCM 2152 / NBRC 15305 / NCIMB 9373 / NCTC 2599 / NRRL B-3711) protein is UPF0421 protein BC_2748.